The following is a 321-amino-acid chain: tRNA U34 carboxymethyltransferase (321 aa).

Carboxy-S-adenosyl-L-methionine is bound by residues Lys-90, Trp-104, Lys-109, Gly-129, 151 to 153 (DPT), 180 to 181 (IE), Met-195, Tyr-199, and Arg-314.

The protein belongs to the class I-like SAM-binding methyltransferase superfamily. CmoB family. In terms of assembly, homotetramer.

It carries out the reaction carboxy-S-adenosyl-L-methionine + 5-hydroxyuridine(34) in tRNA = 5-carboxymethoxyuridine(34) in tRNA + S-adenosyl-L-homocysteine + H(+). Functionally, catalyzes carboxymethyl transfer from carboxy-S-adenosyl-L-methionine (Cx-SAM) to 5-hydroxyuridine (ho5U) to form 5-carboxymethoxyuridine (cmo5U) at position 34 in tRNAs. This Haemophilus influenzae (strain 86-028NP) protein is tRNA U34 carboxymethyltransferase.